We begin with the raw amino-acid sequence, 548 residues long: Membrane protein insertase YidC (548 aa).

The helical transmembrane segment at 6-26 (NLLVIALLFVSFMIWQAWEQD) threads the bilayer. The interval 28-55 (NPQPQAQQTTQTTTTAAGSAADQGVPAS) is disordered. Over residues 30–50 (QPQAQQTTQTTTTAAGSAADQ) the composition is skewed to low complexity. 4 helical membrane passes run 350-370 (FVGN…GIMY), 420-440 (LGGC…YYML), 458-478 (LSAQ…MFFI), and 499-519 (PVIF…YYIV).

It belongs to the OXA1/ALB3/YidC family. Type 1 subfamily. In terms of assembly, interacts with the Sec translocase complex via SecD. Specifically interacts with transmembrane segments of nascent integral membrane proteins during membrane integration.

It localises to the cell inner membrane. In terms of biological role, required for the insertion and/or proper folding and/or complex formation of integral membrane proteins into the membrane. Involved in integration of membrane proteins that insert both dependently and independently of the Sec translocase complex, as well as at least some lipoproteins. Aids folding of multispanning membrane proteins. The chain is Membrane protein insertase YidC from Escherichia coli (strain K12 / MC4100 / BW2952).